Consider the following 115-residue polypeptide: NADH-ubiquinone oxidoreductase chain 3 (115 aa).

Helical transmembrane passes span 4 to 24 (LTVL…AFWL), 55 to 75 (FFLV…LLPL), and 87 to 107 (MMLT…YEWM).

This sequence belongs to the complex I subunit 3 family. As to quaternary structure, core subunit of respiratory chain NADH dehydrogenase (Complex I) which is composed of 45 different subunits. Interacts with TMEM186. Interacts with TMEM242.

It localises to the mitochondrion inner membrane. The enzyme catalyses a ubiquinone + NADH + 5 H(+)(in) = a ubiquinol + NAD(+) + 4 H(+)(out). Functionally, core subunit of the mitochondrial membrane respiratory chain NADH dehydrogenase (Complex I) which catalyzes electron transfer from NADH through the respiratory chain, using ubiquinone as an electron acceptor. Essential for the catalytic activity of complex I. The polypeptide is NADH-ubiquinone oxidoreductase chain 3 (Peromyscus slevini (Slevin's mouse)).